A 266-amino-acid polypeptide reads, in one-letter code: Glucosamine-6-phosphate deaminase (266 aa).

Asp67 (proton acceptor; for enolization step) is an active-site residue. The active-site For ring-opening step is Asn139. Catalysis depends on His141, which acts as the Proton acceptor; for ring-opening step. Catalysis depends on Glu146, which acts as the For ring-opening step.

It belongs to the glucosamine/galactosamine-6-phosphate isomerase family. NagB subfamily. Homohexamer.

The enzyme catalyses alpha-D-glucosamine 6-phosphate + H2O = beta-D-fructose 6-phosphate + NH4(+). It participates in amino-sugar metabolism; N-acetylneuraminate degradation; D-fructose 6-phosphate from N-acetylneuraminate: step 5/5. In terms of biological role, catalyzes the reversible isomerization-deamination of glucosamine 6-phosphate (GlcN6P) to form fructose 6-phosphate (Fru6P) and ammonium ion. In Marinomonas sp. (strain MWYL1), this protein is Glucosamine-6-phosphate deaminase.